We begin with the raw amino-acid sequence, 1228 residues long: Calcium-transporting ATPase (1228 aa).

The Cytoplasmic segment spans residues 1–63; that stretch reads MEEVIKNAHT…FELILNQFDD (63 aa). A helical membrane pass occupies residues 64–81; that stretch reads LLVKILLLAAFISFVLTL. At 82-92 the chain is on the extracellular side; the sequence is LDMKHKKIEIC. A helical transmembrane segment spans residues 93–112; that stretch reads DFIEPLVIVLILILNAAVGV. The Cytoplasmic segment spans residues 113 to 270; that stretch reads WQECNAEKSL…IDLFGQQLSK (158 aa). A helical transmembrane segment spans residues 271-291; it reads IIFVICVTVWIINFKHFSDPI. The Extracellular portion of the chain corresponds to 292–300; sequence HGSFLYGCL. Residues 301–321 form a helical membrane-spanning segment; that stretch reads YYFKISVALAVAAIPEGLPAV. Topologically, residues 322–974 are cytoplasmic; that stretch reads ITTCLALGTR…IYNNMKAFIR (653 aa). The active-site 4-aspartylphosphate intermediate is the D358. Disordered regions lie at residues 452 to 478 and 562 to 613; these read MKND…IPLK and MPAE…LKNA. Over residues 589-604 the composition is skewed to polar residues; the sequence is FFSSKNDNSHITSTLN. K716 lines the ATP pocket. A helical transmembrane segment spans residues 975 to 994; that stretch reads YLISSNIGEVASIFITALLG. Topologically, residues 995–1000 are extracellular; that stretch reads IPDSLA. The chain crosses the membrane as a helical span at residues 1001 to 1021; sequence PVQLLWVNLVTDGLPATALGF. Residues 1022-1042 lie on the Cytoplasmic side of the membrane; it reads NPPEHDVMKCKPRHKNDNLIN. A helical membrane pass occupies residues 1043–1067; the sequence is GLTLLRYIIIGTYVGIATVSIFVYW. Residues 1068-1118 are Extracellular-facing; the sequence is FLFYPDSDMHTLINFYQLSHYNQCKAWNNFRVNKVYDMSEDHCSYFSAGKI. A helical transmembrane segment spans residues 1119–1140; sequence KASTLSLSVLVLIEMFNALNAL. Over 1141 to 1151 the chain is Cytoplasmic; the sequence is SEYNSLFEIPP. Residues 1152-1172 form a helical membrane-spanning segment; the sequence is WRNMYLVLATIGSLLLHVLIL. The Extracellular portion of the chain corresponds to 1173–1185; it reads YIPPLARIFGVVP. The helical transmembrane segment at 1186–1206 threads the bilayer; sequence LSAYDWFLVFLWSFPVIILDE. The Cytoplasmic portion of the chain corresponds to 1207–1228; it reads IIKFYAKRKLKEEQRTKKIKID.

This sequence belongs to the cation transport ATPase (P-type) (TC 3.A.3) family.

The protein resides in the membrane. It carries out the reaction Ca(2+)(in) + ATP + H2O = Ca(2+)(out) + ADP + phosphate + H(+). This magnesium-dependent enzyme catalyzes the hydrolysis of ATP coupled with the transport of the calcium. This chain is Calcium-transporting ATPase (ATP6), found in Plasmodium falciparum (isolate K1 / Thailand).